The primary structure comprises 209 residues: uncharacterized protein (209 aa).

Active-site charge relay system residues include S119 and H160.

This sequence belongs to the peptidase S51 family.

This is an uncharacterized protein from Listeria innocua serovar 6a (strain ATCC BAA-680 / CLIP 11262).